Here is a 316-residue protein sequence, read N- to C-terminus: Inactive peptidyl-prolyl cis-trans isomerase FKBP6 (316 aa).

In terms of domain architecture, PPIase FKBP-type spans 43 to 132 (DASVLVKYSG…LFEIELLDFL (90 aa)). TPR repeat units lie at residues 160 to 193 (AATE…LHRR), 208 to 241 (LLVL…DQKN), and 242 to 275 (AKAL…QPFN).

It belongs to the FKBP6 family. Interacts with HSP72/HSPA2 and CLTC. Interacts with GAPDH; leading to inhibit GAPDH catalytic activity. Interacts (via TPR repeats) with HSP90. As to expression, specifically expressed in testis and sperm.

It localises to the cytoplasm. The protein resides in the cytosol. Its subcellular location is the nucleus. Co-chaperone required during spermatogenesis to repress transposable elements and prevent their mobilization, which is essential for the germline integrity. Acts via the piRNA metabolic process, which mediates the repression of transposable elements during meiosis by forming complexes composed of piRNAs and Piwi proteins and govern the methylation and subsequent repression of transposons. Acts as a co-chaperone via its interaction with HSP90 and is required for the piRNA amplification process, the secondary piRNA biogenesis. May be required together with HSP90 in removal of 16 nucleotide ping-pong by-products from Piwi complexes, possibly facilitating turnover of Piwi complexes. This chain is Inactive peptidyl-prolyl cis-trans isomerase FKBP6 (FKBP6), found in Equus caballus (Horse).